Reading from the N-terminus, the 163-residue chain is Putative 4-hydroxy-4-methyl-2-oxoglutarate aldolase (163 aa).

Substrate-binding positions include 76–79 (GDML) and Arg98. An a divalent metal cation-binding site is contributed by Asp99.

Belongs to the class II aldolase/RraA-like family. Homotrimer. Requires a divalent metal cation as cofactor.

It carries out the reaction 4-hydroxy-4-methyl-2-oxoglutarate = 2 pyruvate. It catalyses the reaction oxaloacetate + H(+) = pyruvate + CO2. Catalyzes the aldol cleavage of 4-hydroxy-4-methyl-2-oxoglutarate (HMG) into 2 molecules of pyruvate. Also contains a secondary oxaloacetate (OAA) decarboxylase activity due to the common pyruvate enolate transition state formed following C-C bond cleavage in the retro-aldol and decarboxylation reactions. The sequence is that of Putative 4-hydroxy-4-methyl-2-oxoglutarate aldolase from Pseudomonas fluorescens (strain ATCC BAA-477 / NRRL B-23932 / Pf-5).